The primary structure comprises 452 residues: Retinoid-inducible serine carboxypeptidase (452 aa).

The first 28 residues, 1-28 (MELSRRICLVRLWLLLLSFLLGFSAGSA), serve as a signal peptide directing secretion. 3 N-linked (GlcNAc...) asparagine glycosylation sites follow: Asn64, Asn102, and Asn126. Ser167 is an active-site residue. 2 N-linked (GlcNAc...) asparagine glycosylation sites follow: Asn192 and Asn362. Catalysis depends on residues Asp371 and His431.

It belongs to the peptidase S10 family. Highly expressed in aorta, bladder, and kidney with much lower levels in all other tissues analyzed. Expression in kidney is restricted to proximal convoluted tubules.

The protein localises to the secreted. In terms of biological role, may be involved in vascular wall and kidney homeostasis. The sequence is that of Retinoid-inducible serine carboxypeptidase (Scpep1) from Rattus norvegicus (Rat).